Here is a 140-residue protein sequence, read N- to C-terminus: FlaA locus uncharacterized protein YlxG (140 aa).

Positions 1–21 are disordered; the sequence is MTSISSEYKLPEKTNTVSTNN.

This sequence belongs to the FlgD family.

The protein is FlaA locus uncharacterized protein YlxG (ylxG) of Bacillus subtilis (strain 168).